The primary structure comprises 227 residues: tRNA (guanine-N(1)-)-methyltransferase (227 aa).

Residues G110 and 129–134 (IGDYVL) each bind S-adenosyl-L-methionine.

It belongs to the RNA methyltransferase TrmD family. Homodimer.

The protein localises to the cytoplasm. The catalysed reaction is guanosine(37) in tRNA + S-adenosyl-L-methionine = N(1)-methylguanosine(37) in tRNA + S-adenosyl-L-homocysteine + H(+). Functionally, specifically methylates guanosine-37 in various tRNAs. The chain is tRNA (guanine-N(1)-)-methyltransferase from Mycoplasmopsis synoviae (strain 53) (Mycoplasma synoviae).